The primary structure comprises 137 residues: Protein E6 (137 aa).

2 zinc fingers span residues 17-53 and 90-127; these read CLWC…CTIC and CCYC…CYDC.

This sequence belongs to the papillomaviridae E6 protein family. As to quaternary structure, forms homodimers. Interacts with ubiquitin-protein ligase UBE3A/E6-AP; this interaction stimulates UBE3A ubiquitin activity. Interacts with host BAK1. Interacts with human FBLN1.

The protein localises to the host cytoplasm. The protein resides in the host nucleus. Functionally, plays a major role in the induction and maintenance of cellular transformation. E6 associates with host UBE3A/E6-AP ubiquitin-protein ligase and modulates its activity. Protects host keratinocytes from apoptosis by mediating the degradation of host BAK1. May also inhibit host immune response. This Bos taurus (Bovine) protein is Protein E6.